The primary structure comprises 229 residues: Cytidylate kinase (229 aa).

15–23 (GPAASGKST) serves as a coordination point for ATP.

It belongs to the cytidylate kinase family. Type 1 subfamily.

Its subcellular location is the cytoplasm. The enzyme catalyses CMP + ATP = CDP + ADP. The catalysed reaction is dCMP + ATP = dCDP + ADP. The sequence is that of Cytidylate kinase from Herpetosiphon aurantiacus (strain ATCC 23779 / DSM 785 / 114-95).